We begin with the raw amino-acid sequence, 74 residues long: Conotoxin ArMKLT2-041 (74 aa).

An N-terminal signal peptide occupies residues 1-22 (MKLTCVLIVAVLFLTACQLIAA). Positions 23–46 (DDSRDLQKFPRRKMRDGMLNTKNT) are excised as a propeptide. Gln49 carries the pyrrolidone carboxylic acid modification. 3 cysteine pairs are disulfide-bonded: Cys50–Cys65, Cys57–Cys68, and Cys64–Cys73.

It belongs to the conotoxin O1 superfamily. As to expression, expressed by the venom duct.

Its subcellular location is the secreted. This chain is Conotoxin ArMKLT2-041, found in Conus arenatus (Sand-dusted cone).